Reading from the N-terminus, the 586-residue chain is Phosphomethylpyrimidine synthase (586 aa).

The tract at residues 1 to 58 (MKQSVSAEQIELKSSLPGSKKVYVDGPREGMKVPMREIEQSDTNGVPNPPIRVYDTSG) is disordered. The span at 22 to 39 (VYVDGPREGMKVPMREIE) shows a compositional bias: basic and acidic residues. Residues N193, M222, Y251, H287, 307–309 (SRG), 348–351 (DGLR), and E387 contribute to the substrate site. Zn(2+) is bound at residue H391. Y414 lines the substrate pocket. Residue H455 participates in Zn(2+) binding. Positions 535, 538, and 543 each coordinate [4Fe-4S] cluster.

It belongs to the ThiC family. The cofactor is [4Fe-4S] cluster.

It carries out the reaction 5-amino-1-(5-phospho-beta-D-ribosyl)imidazole + S-adenosyl-L-methionine = 4-amino-2-methyl-5-(phosphooxymethyl)pyrimidine + CO + 5'-deoxyadenosine + formate + L-methionine + 3 H(+). It participates in cofactor biosynthesis; thiamine diphosphate biosynthesis. Catalyzes the synthesis of the hydroxymethylpyrimidine phosphate (HMP-P) moiety of thiamine from aminoimidazole ribotide (AIR) in a radical S-adenosyl-L-methionine (SAM)-dependent reaction. This Bacillus thuringiensis (strain Al Hakam) protein is Phosphomethylpyrimidine synthase.